We begin with the raw amino-acid sequence, 625 residues long: Putative xanthine/uracil permease C887.17 (625 aa).

The next 10 membrane-spanning stretches (helical) occupy residues Ala-49–Val-69, Ala-107–Met-127, Glu-154–Leu-174, Ala-192–Ile-212, Met-246–Tyr-263, Phe-328–Tyr-348, Val-369–Val-389, Gly-406–Phe-426, Ile-429–Thr-449, and Ile-465–Ile-485. Residues Glu-595–Ile-625 form a disordered region.

Belongs to the nucleobase:cation symporter-2 (NCS2) (TC 2.A.40) family. Azg-like subfamily.

The protein resides in the golgi apparatus membrane. The sequence is that of Putative xanthine/uracil permease C887.17 from Schizosaccharomyces pombe (strain 972 / ATCC 24843) (Fission yeast).